Here is a 1142-residue protein sequence, read N- to C-terminus: Nucleoporin nup131 (1142 aa).

This sequence belongs to the nucleoporin Nup133 family. Component of the npc107-120 complex which consists of nup85, nup107, nup120, nup131, nup132 and seh1. Interacts with nup107.

The protein localises to the nucleus. In terms of biological role, functions as a component of the nuclear pore complex (NPC). NPC components, collectively referred to as nucleoporins (NUPs), can play the role of both NPC structural components and of docking or interaction partners for transiently associated nuclear transport factors. Active directional transport is assured by both, a Phe-Gly (FG) repeat affinity gradient for these transport factors across the NPC and a transport cofactor concentration gradient across the nuclear envelope. The polypeptide is Nucleoporin nup131 (nup131) (Schizosaccharomyces pombe (strain 972 / ATCC 24843) (Fission yeast)).